A 334-amino-acid chain; its full sequence is Replication factor C subunit 4 (334 aa).

55–62 serves as a coordination point for ATP; the sequence is GPPGTGKT.

This sequence belongs to the activator 1 small subunits family. As to quaternary structure, heteropentamer of various rfc subunits that forms a complex (RFC) with PCNA in the presence of ATP.

It localises to the nucleus. The elongation of primed DNA templates by DNA polymerase delta and epsilon requires the action of the accessory proteins PCNA and activator 1. This subunit may be involved in the elongation of the multiprimed DNA template. The polypeptide is Replication factor C subunit 4 (rfc-4) (Caenorhabditis elegans).